We begin with the raw amino-acid sequence, 137 residues long: Large ribosomal subunit protein uL24 (137 aa).

The protein belongs to the universal ribosomal protein uL24 family. Part of the 50S ribosomal subunit.

Its function is as follows. One of two assembly initiator proteins, it binds directly to the 5'-end of the 23S rRNA, where it nucleates assembly of the 50S subunit. Located at the polypeptide exit tunnel on the outside of the subunit. This is Large ribosomal subunit protein uL24 from Sulfurisphaera tokodaii (strain DSM 16993 / JCM 10545 / NBRC 100140 / 7) (Sulfolobus tokodaii).